The chain runs to 426 residues: Phosphomethylpyrimidine synthase (426 aa).

Substrate-binding positions include Asn65, Met94, Tyr123, His162, 184 to 186 (SRG), 225 to 228 (DGMR), and Glu264. His268 is a Zn(2+) binding site. A substrate-binding site is contributed by Tyr291. His332 serves as a coordination point for Zn(2+). [4Fe-4S] cluster contacts are provided by Cys408, Cys411, and Cys415.

The protein belongs to the ThiC family. [4Fe-4S] cluster is required as a cofactor.

The catalysed reaction is 5-amino-1-(5-phospho-beta-D-ribosyl)imidazole + S-adenosyl-L-methionine = 4-amino-2-methyl-5-(phosphooxymethyl)pyrimidine + CO + 5'-deoxyadenosine + formate + L-methionine + 3 H(+). It participates in cofactor biosynthesis; thiamine diphosphate biosynthesis. In terms of biological role, catalyzes the synthesis of the hydroxymethylpyrimidine phosphate (HMP-P) moiety of thiamine from aminoimidazole ribotide (AIR) in a radical S-adenosyl-L-methionine (SAM)-dependent reaction. This Methanocaldococcus jannaschii (strain ATCC 43067 / DSM 2661 / JAL-1 / JCM 10045 / NBRC 100440) (Methanococcus jannaschii) protein is Phosphomethylpyrimidine synthase.